The primary structure comprises 201 residues: Small ribosomal subunit protein uS4c (201 aa).

Positions 15–43 are disordered; the sequence is LGALPGLTSKRPRPGSDLRNQSRSGKRSQ. The region spanning 89–150 is the S4 RNA-binding domain; that stretch reads MRLDNILFRL…EQRSRALIQN (62 aa).

This sequence belongs to the universal ribosomal protein uS4 family. In terms of assembly, part of the 30S ribosomal subunit. Contacts protein S5. The interaction surface between S4 and S5 is involved in control of translational fidelity.

The protein localises to the plastid. It localises to the chloroplast. Its function is as follows. One of the primary rRNA binding proteins, it binds directly to 16S rRNA where it nucleates assembly of the body of the 30S subunit. Functionally, with S5 and S12 plays an important role in translational accuracy. The polypeptide is Small ribosomal subunit protein uS4c (rps4) (Liriodendron tulipifera (Tuliptree)).